Consider the following 282-residue polypeptide: DNA-directed RNA polymerase III subunit RPC5 (282 aa).

The segment at 1–70 (MSIDNKLFVT…TGEEEEDDPV (70 aa)) is disordered. Composition is skewed to acidic residues over residues 10–35 (TEED…DMIA) and 60–70 (DTGEEEEDDPV). Thr-61 carries the post-translational modification Phosphothreonine.

As to quaternary structure, component of the RNA polymerase III (Pol III) complex consisting of 17 subunits. Interacts with RPC53/RPC4. RPC53/RPC4, RPC37/RPC5 and RPC11/RPC10 probably form a Pol III subcomplex.

The protein resides in the nucleus. In terms of biological role, DNA-dependent RNA polymerase catalyzes the transcription of DNA into RNA using the four ribonucleoside triphosphates as substrates. Specific peripheric component of RNA polymerase III which synthesizes small RNAs, such as 5S rRNA and tRNAs. The RPC53/RPC4-RPC37/RPC5 subcomplex is required for terminator recognition and reinitiation. The chain is DNA-directed RNA polymerase III subunit RPC5 (RPC37) from Saccharomyces cerevisiae (strain ATCC 204508 / S288c) (Baker's yeast).